A 307-amino-acid polypeptide reads, in one-letter code: Protein rep (307 aa).

Y219 contacts DNA.

It belongs to the Gram-positive plasmids replication protein type 1 family.

The sequence is that of Protein rep (repA) from Bacillus sp.